Consider the following 116-residue polypeptide: MTEQAEDALPIRFTDAAASKVKTLLEEEENDALKLRVYVTGGGCSGFQYGFTFDEKVNEGDFTVEKQGVQLVVDPMSLQYLVGGEVDYTSGLEGSRFFVKNPNATTTCGCGASFSV.

Cysteine 44, cysteine 108, and cysteine 110 together coordinate iron-sulfur cluster.

This sequence belongs to the HesB/IscA family. In terms of assembly, homodimer. It depends on iron-sulfur cluster as a cofactor.

Functionally, required for insertion of 4Fe-4S clusters for at least IspG. In Shewanella pealeana (strain ATCC 700345 / ANG-SQ1), this protein is Iron-sulfur cluster insertion protein ErpA.